A 469-amino-acid chain; its full sequence is ATP synthase subunit beta (469 aa).

155-162 (GGAGVGKT) contacts ATP.

Belongs to the ATPase alpha/beta chains family. F-type ATPases have 2 components, CF(1) - the catalytic core - and CF(0) - the membrane proton channel. CF(1) has five subunits: alpha(3), beta(3), gamma(1), delta(1), epsilon(1). CF(0) has three main subunits: a(1), b(2) and c(9-12). The alpha and beta chains form an alternating ring which encloses part of the gamma chain. CF(1) is attached to CF(0) by a central stalk formed by the gamma and epsilon chains, while a peripheral stalk is formed by the delta and b chains.

Its subcellular location is the cell inner membrane. The catalysed reaction is ATP + H2O + 4 H(+)(in) = ADP + phosphate + 5 H(+)(out). Its function is as follows. Produces ATP from ADP in the presence of a proton gradient across the membrane. The catalytic sites are hosted primarily by the beta subunits. The chain is ATP synthase subunit beta from Thermosipho melanesiensis (strain DSM 12029 / CIP 104789 / BI429).